The following is a 296-amino-acid chain: MTAPTPTPANAATPYGTLPPASPLPQRRPVSLPRLAQMREAGEKITMLTAYDATFAAVADAAGVECLLVGDSLGMVCQGLPSTVGVSLDTMAYHTASVARGLHRVQGTAWLIADLPYGSYAEGPEQAMRSACTLMQAGAHMVKLEGGGWTAPTVRFLVERGVPVCAHLGLTPQTVHALGGYRVQGRSDEAARALRSQANELQDAGAAMLVLEMVPATLAREVTDALPRCHTIGIGAGSGTAGQVLVLHDMLGVNLGKNPKFAHDFMAQAGSVRGAIEAYVQAVKAGRFPDDALHAW.

Residues 1-14 are compositionally biased toward low complexity; that stretch reads MTAPTPTPANAATP. The disordered stretch occupies residues 1 to 29; that stretch reads MTAPTPTPANAATPYGTLPPASPLPQRRP. Mg(2+) contacts are provided by D71 and D114. Residues 71-72, D114, and K143 contribute to the 3-methyl-2-oxobutanoate site; that span reads DS. E145 contributes to the Mg(2+) binding site. E212 acts as the Proton acceptor in catalysis.

It belongs to the PanB family. As to quaternary structure, homodecamer; pentamer of dimers. Mg(2+) is required as a cofactor.

The protein localises to the cytoplasm. It carries out the reaction 3-methyl-2-oxobutanoate + (6R)-5,10-methylene-5,6,7,8-tetrahydrofolate + H2O = 2-dehydropantoate + (6S)-5,6,7,8-tetrahydrofolate. It functions in the pathway cofactor biosynthesis; (R)-pantothenate biosynthesis; (R)-pantoate from 3-methyl-2-oxobutanoate: step 1/2. Catalyzes the reversible reaction in which hydroxymethyl group from 5,10-methylenetetrahydrofolate is transferred onto alpha-ketoisovalerate to form ketopantoate. This Paracidovorax citrulli (strain AAC00-1) (Acidovorax citrulli) protein is 3-methyl-2-oxobutanoate hydroxymethyltransferase.